We begin with the raw amino-acid sequence, 3680 residues long: Dystrophin (3680 aa).

Residues 1–237 (MLWWEEVEDC…ILMYITSLFQ (237 aa)) are actin-binding. Calponin-homology (CH) domains are found at residues 15-119 (DVQK…LHWQ) and 134-240 (TNSE…QVLP). The tract at residues 63–72 (PKEKGSTRVH) is ANK2- and ANK-3 binding. The segment covering 310–323 (TSDPTRSPLPSQHL) has biased composition (polar residues). A disordered region spans residues 310 to 332 (TSDPTRSPLPSQHLETPEDKSFG). Spectrin repeat units lie at residues 340 to 448 (ANLD…NLHK), 449 to 557 (VLMD…LLQD), 560 to 668 (LKWQ…QISQ), 720 to 829 (EIRK…WLEY), 831 to 935 (NNII…ELQT), 944 to 1047 (RYQE…KLEE), 1050 to 1156 (AKLR…ALKG), 1159 to 1265 (DKTV…TLEE), 1268 to 1369 (ACWH…LLEQ), 1370 to 1465 (SIQS…LFQK), 1470 to 1570 (EQRL…QLEK), 1573 to 1678 (KLSR…LLLE), 1681 to 1780 (KHME…KASI), 1781 to 1876 (PLKE…KALE), 1879 to 1981 (HQWY…TVHE), 1994 to 2103 (EISY…RFDR), 2106 to 2210 (EKWR…RLEE), 2213 to 2320 (NILS…EIEA), 2321 to 2418 (HVKD…LRAK), 2470 to 2572 (FNRA…QLTE), 2575 to 2681 (KDST…ALEE), 2684 to 2797 (RLLQ…HLEA), 2803 to 2925 (KRLH…RKID), and 2930 to 3035 (RLQE…QLHE). The segment at 1418–1915 (DLTSHEISLE…PEPRDERKIK (498 aa)) is interaction with SYNM. The region spanning 3050 to 3083 (TSVQGPWERAISPNKVPYYINHETQTTCWDHPKM) is the WW domain. The interaction with SYNM stretch occupies residues 3053–3403 (QGPWERAISP…TVLEGDNMET (351 aa)). Residues 3303–3359 (KHQAKCNICKECPIIGFRYRSLKHFNYDICQSCFFSGRVAKGHKMHYPMVEYCTPTT) form a ZZ-type; degenerate zinc finger. Zn(2+)-binding residues include cysteine 3308, cysteine 3311, cysteine 3332, and cysteine 3335. Positions 3461-3513 (DDEHLLIQHYWRSLNQESPLSQPRSPAQILISLESEERGELERILADLEGRNR) are binds to SNTB1. Serine 3478, serine 3485, and serine 3495 each carry phosphoserine. Disordered stretches follow at residues 3524–3549 (QQHEHKGLSPLPSPPEMMPTSPQSPR) and 3595–3680 (PQAE…EDTM). Composition is skewed to polar residues over residues 3602–3621 (NGTTVSSPSTSLQRSDSSQP) and 3658–3668 (LNHSFPSSRGR). Residues serine 3607, serine 3608, serine 3612, serine 3618, serine 3619, and serine 3661 each carry the phosphoserine modification.

In terms of assembly, interacts with SYNM. Interacts with the syntrophins SNTG1 and SNTG2. Interacts with KRT19. Component of the dystrophin-associated glycoprotein complex which is composed of three subcomplexes: a cytoplasmic complex comprised of DMD (or UTRN), DTNA and a number of syntrophins, such as SNTB1, SNTB2, SNTG1 and SNTG2, the transmembrane dystroglycan complex, and the sarcoglycan-sarcospan complex. Interacts with DAG1 (betaDAG1) with DMD; the interaction is inhibited by phosphorylation on the PPXY motif of DAG1. Interacts with SYNM; SNTA1 and SNTB1. Interacts with CMYA5. Directly interacts with ANK2 and ANK3; these interactions do not interfere with betaDAG1-binding and are necessary for proper localization in muscle cells. Identified in a dystroglycan complex that contains at least PRX, DRP2, UTRN, DMD and DAG1. Interacts with DTNB. Interacts with PGM5; the interaction is direct. Interacts with NOS1; localizes NOS1 to sarcolemma in muscle cells.

It localises to the cell membrane. The protein resides in the sarcolemma. It is found in the cytoplasm. The protein localises to the cytoskeleton. Its subcellular location is the postsynaptic cell membrane. In terms of biological role, anchors the extracellular matrix to the cytoskeleton via F-actin. Ligand for dystroglycan. Component of the dystrophin-associated glycoprotein complex which accumulates at the neuromuscular junction (NMJ) and at a variety of synapses in the peripheral and central nervous systems and has a structural function in stabilizing the sarcolemma. Also implicated in signaling events and synaptic transmission. This is Dystrophin (DMD) from Canis lupus familiaris (Dog).